A 493-amino-acid chain; its full sequence is V-type proton ATPase subunit B (493 aa).

This sequence belongs to the ATPase alpha/beta chains family. In terms of assembly, V-ATPase is a heteromultimeric enzyme composed of a peripheral catalytic V1 complex (main components: subunits A, B, C, D, E, and F) attached to an integral membrane V0 proton pore complex (main component: the proteolipid protein).

The protein localises to the cytoplasmic vesicle membrane. It localises to the endosome membrane. Its subcellular location is the contractile vacuole membrane. Its function is as follows. Vacuolar ATPase is responsible for acidifying a variety of intracellular compartments in eukaryotic cells. The B subunit is non-catalytic but combines with other subunits to form the catalytic complex. V-ATPase is responsible for energizing electrophoretic K(+)/2H(+) antiport by generating a transmembrane voltage of more than 200 mV. This chain is V-type proton ATPase subunit B (vatB), found in Dictyostelium discoideum (Social amoeba).